The chain runs to 292 residues: ATP synthase gamma chain (292 aa).

The protein belongs to the ATPase gamma chain family. F-type ATPases have 2 components, CF(1) - the catalytic core - and CF(0) - the membrane proton channel. CF(1) has five subunits: alpha(3), beta(3), gamma(1), delta(1), epsilon(1). CF(0) has three main subunits: a, b and c.

It localises to the cell inner membrane. Its function is as follows. Produces ATP from ADP in the presence of a proton gradient across the membrane. The gamma chain is believed to be important in regulating ATPase activity and the flow of protons through the CF(0) complex. The polypeptide is ATP synthase gamma chain (Bradyrhizobium sp. (strain ORS 278)).